The sequence spans 347 residues: 5-formaminoimidazole-4-carboxamide-1-(beta)-D-ribofuranosyl 5'-monophosphate synthetase (347 aa).

The 5-amino-1-(5-phospho-beta-D-ribosyl)imidazole-4-carboxamide site is built by histidine 23 and serine 91. An ATP-grasp domain is found at 112 to 323 (RKILLWESDQ…YSYLYWDEPM (212 aa)). Residues 142–196 (PDEV…VPAY) and glutamate 218 contribute to the ATP site. Asparagine 244 provides a ligand contact to 5-amino-1-(5-phospho-beta-D-ribosyl)imidazole-4-carboxamide. Residues glutamate 283 and glutamate 296 each coordinate Mg(2+).

The protein belongs to the phosphohexose mutase family. Requires Mg(2+) as cofactor. It depends on Mn(2+) as a cofactor.

The catalysed reaction is 5-amino-1-(5-phospho-beta-D-ribosyl)imidazole-4-carboxamide + formate + ATP = 5-formamido-1-(5-phospho-D-ribosyl)imidazole-4-carboxamide + ADP + phosphate. It functions in the pathway purine metabolism; IMP biosynthesis via de novo pathway; 5-formamido-1-(5-phospho-D-ribosyl)imidazole-4-carboxamide from 5-amino-1-(5-phospho-D-ribosyl)imidazole-4-carboxamide (formate route): step 1/1. Its function is as follows. Catalyzes the ATP- and formate-dependent formylation of 5-aminoimidazole-4-carboxamide-1-beta-d-ribofuranosyl 5'-monophosphate (AICAR) to 5-formaminoimidazole-4-carboxamide-1-beta-d-ribofuranosyl 5'-monophosphate (FAICAR) in the absence of folates. This chain is 5-formaminoimidazole-4-carboxamide-1-(beta)-D-ribofuranosyl 5'-monophosphate synthetase, found in Ignicoccus hospitalis (strain KIN4/I / DSM 18386 / JCM 14125).